Here is a 620-residue protein sequence, read N- to C-terminus: Transcription factor kayak (620 aa).

Disordered regions lie at residues 1 to 36 (MKVK…SNGV) and 184 to 288 (SDTD…EKRR). The segment covering 184–194 (SDTDDSNASWN) has biased composition (polar residues). Composition is skewed to low complexity over residues 201-233 (GDTT…GANN) and 249-266 (ANNN…PAAR). Residues 284-347 (EEKRRIRRER…NQLKYVIEAH (64 aa)) enclose the bZIP domain. The segment at 286–305 (KRRIRRERNKAAAARCRKRR) is basic motif. A leucine-zipper region spans residues 312 to 340 (LTEEVDALVKKGDTLKAEITTLTELRNQL). The segment at 375 to 414 (STGGSSCGSVHSNHSHNNNNNNNNSNDSSSGTITGFDATL) is disordered. Residues 377–405 (GGSSCGSVHSNHSHNNNNNNNNSNDSSSG) show a composition bias toward low complexity. Ser422 is subject to Phosphoserine. 2 disordered regions span residues 447–466 (GLDS…AKRA) and 590–620 (SGPL…LCPL).

The protein belongs to the bZIP family. Fos subfamily. Homodimer. Heterodimer with Jra. The kay-Jra heterodimer binds more stably to the AP-1 site than either of the two proteins alone.

Its subcellular location is the nucleus. Developmentally regulated transcription factor AP-1 binds and recognizes the enhancer DNA sequence: 5'-TGA[CG]TCA-3'. May play a role in the function or determination of a particular subset of cells in the developing embryo. It is able to carry out its function either independently of or in conjunction with Jra. This chain is Transcription factor kayak, found in Drosophila willistoni (Fruit fly).